A 1070-amino-acid polypeptide reads, in one-letter code: DNA-directed RNA polymerase subunit beta (1070 aa).

Belongs to the RNA polymerase beta chain family. In terms of assembly, in plastids the minimal PEP RNA polymerase catalytic core is composed of four subunits: alpha, beta, beta', and beta''. When a (nuclear-encoded) sigma factor is associated with the core the holoenzyme is formed, which can initiate transcription.

Its subcellular location is the plastid. It localises to the chloroplast. The catalysed reaction is RNA(n) + a ribonucleoside 5'-triphosphate = RNA(n+1) + diphosphate. DNA-dependent RNA polymerase catalyzes the transcription of DNA into RNA using the four ribonucleoside triphosphates as substrates. This chain is DNA-directed RNA polymerase subunit beta, found in Spinacia oleracea (Spinach).